The sequence spans 371 residues: Diguanylate cyclase A (371 aa).

The GGDEF domain maps to Glu-233–Asn-366. The Mg(2+) site is built by Asp-241, Ile-242, and Glu-284. Glu-284 (proton acceptor) is an active-site residue.

In terms of assembly, exists as a homodimer and as larger aggregates. Both dimers and aggregates possess DGC activity. It depends on Mg(2+) as a cofactor. Requires Mn(2+) as cofactor.

It is found in the cytoplasm. It catalyses the reaction 2 GTP = 3',3'-c-di-GMP + 2 diphosphate. With respect to regulation, allosterically regulated by a feedback inhibition loop. Catalyzes the conversion of GTP to cyclic-di-GMP (c-di-GMP). Shows activity under aerobic and anaerobic reaction conditions. The sequence is that of Diguanylate cyclase A from Treponema denticola (strain ATCC 35405 / DSM 14222 / CIP 103919 / JCM 8153 / KCTC 15104).